A 132-amino-acid chain; its full sequence is Venom CUB domain-containing protein 2 (132 aa).

An N-terminal signal peptide occupies residues 1 to 17 (MKTLFLAIALFSAVALA). In terms of domain architecture, CUB spans 22–129 (ESAELVPGGE…RGFVACKATA (108 aa)). 2 disulfide bridges follow: Cys-66–Cys-125 and Cys-77–Cys-94.

It belongs to the venom CUB family. As to expression, expressed by the venom gland (posterior main gland) (at protein level).

It is found in the secreted. The polypeptide is Venom CUB domain-containing protein 2 (Platymeris rhadamanthus (Red spot assassin bug)).